We begin with the raw amino-acid sequence, 43 residues long: Potassium channel toxin gamma-KTx 4.3 (43 aa).

4 disulfides stabilise this stretch: Cys5–Cys23, Cys11–Cys34, Cys20–Cys39, and Cys24–Cys41.

It belongs to the ergtoxin family. Gamma-KTx 4 subfamily. Expressed by the venom gland.

It localises to the secreted. Its function is as follows. Reversibly blocks Kv11/ERG potassium channels. The sequence is that of Potassium channel toxin gamma-KTx 4.3 from Centruroides exilicauda (Bark scorpion).